Here is a 357-residue protein sequence, read N- to C-terminus: MLEDDFGRDVSGVRVSLTDRCNFDCVYCHNEGLGDTRGPIDPRENELSTDRVVRFLSVAHEFGVDAVKLTGGEPMLRSDLEAIIRRTPDDMAVSMTTNGTFLPGRAADLVDAGLERVNISQDAMDNDAFAELTQSGAYDAVLEGVEAALDAGLAPVKLNMVVFEPTAGYVPEMVDHVAARDGLRLQLIEYMPELAGHPEWAIDIDRVHDWLADRADRIETREMHDRRRYWVSSRDAGSTADDAAQSVTPDGGAHPDQGMVEIVDPVGNPQFCANCHRVRLTHDGYLKGCLNRNDDLRGIGETTQSMRAAFRETVANRVPYYGEYMTRTDDGGWEINDDYLDVEGDRDPYEYAADDSA.

Residues 5-234 (DFGRDVSGVR…DRRRYWVSSR (230 aa)) enclose the Radical SAM core domain. Arg-14 provides a ligand contact to GTP. Cys-21 and Cys-25 together coordinate [4Fe-4S] cluster. Residue Tyr-27 participates in S-adenosyl-L-methionine binding. Residue Cys-28 coordinates [4Fe-4S] cluster. A GTP-binding site is contributed by Lys-68. Residue Gly-72 participates in S-adenosyl-L-methionine binding. Residue Thr-96 coordinates GTP. Ser-120 provides a ligand contact to S-adenosyl-L-methionine. Lys-157 lines the GTP pocket. The interval 232-256 (SSRDAGSTADDAAQSVTPDGGAHPD) is disordered. Residues Cys-272 and Cys-275 each coordinate [4Fe-4S] cluster. 277-279 (RVR) lines the GTP pocket. Cys-289 contacts [4Fe-4S] cluster.

Belongs to the radical SAM superfamily. MoaA family. [4Fe-4S] cluster is required as a cofactor.

It catalyses the reaction GTP + AH2 + S-adenosyl-L-methionine = (8S)-3',8-cyclo-7,8-dihydroguanosine 5'-triphosphate + 5'-deoxyadenosine + L-methionine + A + H(+). The protein operates within cofactor biosynthesis; molybdopterin biosynthesis. In terms of biological role, catalyzes the cyclization of GTP to (8S)-3',8-cyclo-7,8-dihydroguanosine 5'-triphosphate. This is Probable GTP 3',8-cyclase from Halobacterium salinarum (strain ATCC 29341 / DSM 671 / R1).